Reading from the N-terminus, the 1035-residue chain is MPRRKQQAPKRAAGYAQEEQLKEEEEIKEEEEEEEDSGSVAQLQGSNDPGTDEELETGAEQKGCFSYQNSPGSHLSNQDAENESLLSDASDQVSDIKSVCSRDASDKKASVHPKLPTEAHSCMDKMTAVYANILSDSYWSGLGLGFKLSSSERRHCDTRNGSSKTDFDWHQDALSKSLQQNLPPRSVSKPSLFSSVQLYRQSSKMCGTVFTGASRFRCRQCSAAYDTLVELTVHMNETGHYQDDNRKKDKLRPTSYSKPRKRAFQDMDKEDAQKVLKCMFCGDSFDSLQDLSVHMIKTKHYQKVPLKEPVPTISSKMVTPAKKRVFDVNRPCSPDSTTGSFADPFPAPKNASLQLSSNNRYGYQNGASYTWQFEACKSQILKCMECGSSHDTLQQLTTHMMVTGHFLKVTSSASKKGKQLVLDPLAVEKMQSLSDAPSSDSLAPKPSSNSASDCTASTTELKRESKKEKPEELRTDEKVLKSEDYEDPLQKPLDPAMKYQYLREEDLEDGSKGGGDILKSLENTVTTAINKAQNGAPSWSAYPSIHAAYQLSEGTKPSLPMGSQVLQIRPNLANKLRPIAPKWKVMPLVSVPTSLAPYTQVKKEPEDKEEVAKECGQESPHEEASSFSHSEGDSFPKSEPPAESKKAEPCPLREEDKRMKDGGEKEKAQPVEPVSSLSNGCALAAHAPAPPCVNPLSALQSVLNNHLGKATEPLRSPSCSSPSSSTMAMFHKSSLGVMDKPVLSPASTRPASVSRRYLFENNDQPIDLTKSKSKKAESSQAQSCTSPPQKHALSDIADMVKVLPKATTPKPAASSRVPPVKLEMDVRRFEDVSSEVSTLHKRKGRQSNWNPQHLLILQAQFASSLFQTSEGKYLLSDLGPQERMQISKFTGLSMTTISHWLANVKYQLRKTGGTKFLKNMDKGHPIFYCSDCASQFRTPSTYISHLESHLGFQMKDMTRMAVEQQSQVEQEISRVSSAQRSPETIAGEEDTDSKFKCKLCCRTFVSKHAVKLHLSKTHSKSPEHHAQFVTDVDEE.

The segment at 1 to 92 is disordered; it reads MPRRKQQAPK…ESLLSDASDQ (92 aa). Residues 13–42 are a coiled coil; the sequence is AGYAQEEQLKEEEEIKEEEEEEEDSGSVAQ. Acidic residues predominate over residues 21-37; the sequence is LKEEEEIKEEEEEEEDS. 2 stretches are compositionally biased toward polar residues: residues 39–49 and 66–92; these read SVAQLQGSNDP and SYQNSPGSHLSNQDAENESLLSDASDQ. A Glycyl lysine isopeptide (Lys-Gly) (interchain with G-Cter in SUMO2) cross-link involves residue K189. C2H2-type zinc fingers lie at residues 216 to 240 and 276 to 300; these read FRCRQCSAAYDTLVELTVHMNETGH and LKCMFCGDSFDSLQDLSVHMIKTKH. Residues 240 to 266 form a disordered region; sequence HYQDDNRKKDKLRPTSYSKPRKRAFQD. Residues K307 and K316 each participate in a glycyl lysine isopeptide (Lys-Gly) (interchain with G-Cter in SUMO2) cross-link. The C2H2-type 3; atypical zinc finger occupies 381–405; the sequence is LKCMECGSSHDTLQQLTTHMMVTGH. K418 is covalently cross-linked (Glycyl lysine isopeptide (Lys-Gly) (interchain with G-Cter in SUMO2)). The segment covering 432-450 has biased composition (low complexity); sequence SLSDAPSSDSLAPKPSSNS. Residues 432-496 are disordered; that stretch reads SLSDAPSSDS…DPLQKPLDPA (65 aa). Basic and acidic residues predominate over residues 460-483; it reads ELKRESKKEKPEELRTDEKVLKSE. Glycyl lysine isopeptide (Lys-Gly) (interchain with G-Cter in SUMO2) cross-links involve residues K462, K481, K498, and K602. 2 disordered regions span residues 600–674 and 764–791; these read QVKK…VEPV and QPIDLTKSKSKKAESSQAQSCTSPPQKH. Positions 601–669 are enriched in basic and acidic residues; it reads VKKEPEDKEE…KDGGEKEKAQ (69 aa). Residues K801 and K821 each participate in a glycyl lysine isopeptide (Lys-Gly) (interchain with G-Cter in SUMO2) cross-link. The segment at residues 842–912 is a DNA-binding region (homeobox); the sequence is RKGRQSNWNP…NVKYQLRKTG (71 aa). Residues 927–949 form a C2H2-type 4 zinc finger; it reads FYCSDCASQFRTPSTYISHLESH. The segment covering 968–977 has biased composition (low complexity); that stretch reads VEQEISRVSS. Disordered regions lie at residues 968–987 and 1015–1035; these read VEQEISRVSSAQRSPETIAG and SKTHSKSPEHHAQFVTDVDEE. S981 is modified (phosphoserine). The C2H2-type 5 zinc-finger motif lies at 995-1018; it reads FKCKLCCRTFVSKHAVKLHLSKTH.

This sequence belongs to the teashirt C2H2-type zinc-finger protein family. In terms of assembly, interacts (via homeobox domain) with APBB1 (via PID domain 1). Post-translationally, sumoylated.

The protein resides in the nucleus. In terms of biological role, probable transcriptional regulator involved in developmental processes. May act as a transcriptional repressor (Potential). The protein is Teashirt homolog 2 (TSHZ2) of Sus scrofa (Pig).